The primary structure comprises 192 residues: 7-methyl-GTP pyrophosphatase (192 aa).

Catalysis depends on Asp-70, which acts as the Proton acceptor.

Belongs to the Maf family. YceF subfamily. A divalent metal cation serves as cofactor.

Its subcellular location is the cytoplasm. It catalyses the reaction N(7)-methyl-GTP + H2O = N(7)-methyl-GMP + diphosphate + H(+). Functionally, nucleoside triphosphate pyrophosphatase that hydrolyzes 7-methyl-GTP (m(7)GTP). May have a dual role in cell division arrest and in preventing the incorporation of modified nucleotides into cellular nucleic acids. The sequence is that of 7-methyl-GTP pyrophosphatase from Xanthomonas campestris pv. campestris (strain 8004).